The following is a 66-amino-acid chain: Heat-stable enterotoxin (66 aa).

The N-terminal stretch at 1-19 (MKKIVFVLVLMLSSFGTFG) is a signal peptide. Residues 20–50 (QETASRQFGDAFSTPIAAEVNKKACDTELPP) constitute a propeptide that is removed on maturation. Cystine bridges form between Cys54–Cys59, Cys55–Cys63, and Cys58–Cys66.

The protein belongs to the heat-stable enterotoxin family.

It is found in the secreted. Toxin which activates the particulate form of guanylate cyclase and increases cyclic GMP levels within the host intestinal epithelial cells. This Yersinia kristensenii protein is Heat-stable enterotoxin (yst).